Here is a 1213-residue protein sequence, read N- to C-terminus: Chitin synthase 3 (1213 aa).

Positions 1 to 97 (MSNFRDSSSP…TPPHQEEEED (97 aa)) are disordered. The Cytoplasmic segment spans residues 1-168 (MSNFRDSSSP…KPKHDIYFWK (168 aa)). A compositionally biased stretch (basic and acidic residues) spans 32–44 (IRPERSRMDESHP). Residues 75–87 (ELSTSRSHLSNYA) show a composition bias toward polar residues. A helical membrane pass occupies residues 169 to 189 (VYCYAITFWAPAPLLKLFGLP). Over 190–200 (TKDRQFAWREK) the chain is Extracellular. A helical membrane pass occupies residues 201–221 (IGLISCILYVGAFVAYLTFGF). The Cytoplasmic portion of the chain corresponds to 222 to 450 (TKTVCSSQVV…TDTIGCIASK (229 aa)). A helical membrane pass occupies residues 451–471 (VVLYMSLVFILSVVVVKFIMA). The Extracellular portion of the chain corresponds to 472-1016 (CWFKWVTSRK…INSTVHNLFE (545 aa)). 2 N-linked (GlcNAc...) asparagine glycosylation sites follow: asparagine 588 and asparagine 1008. The helical transmembrane segment at 1017–1037 (LVLVKDLCGTFCFSMQFVIFI) threads the bilayer. At 1038 to 1039 (EL) the chain is on the cytoplasmic side. Residues 1040 to 1060 (IGTLVLPAAITFTIYVIIVAI) form a helical membrane-spanning segment. The Extracellular segment spans residues 1061-1065 (VSKPT). Residues 1066 to 1086 (PVMSLVLLAVIFGLPGCLIVI) traverse the membrane as a helical segment. The Cytoplasmic segment spans residues 1087–1213 (TVSSLSYLVY…LSQGSSSGSS (127 aa)). The interval 1161-1213 (ERRSTENRKQQQQQQLTNNSSNNLAVPGAAWDPSNTGGNLIDDLSQGSSSGSS) is disordered.

It belongs to the chitin synthase family. Class IV subfamily.

It localises to the cell membrane. It catalyses the reaction [(1-&gt;4)-N-acetyl-beta-D-glucosaminyl](n) + UDP-N-acetyl-alpha-D-glucosamine = [(1-&gt;4)-N-acetyl-beta-D-glucosaminyl](n+1) + UDP + H(+). In terms of biological role, polymerizes chitin, a structural polymer of the cell wall and septum, by transferring the sugar moiety of UDP-GlcNAc to the non-reducing end of the growing chitin polymer. This chain is Chitin synthase 3 (CHS3), found in Candida albicans (Yeast).